The primary structure comprises 338 residues: Eukaryotic translation initiation factor 3 subunit H (338 aa).

An MPN domain is found at valine 22–alanine 154.

The protein belongs to the eIF-3 subunit H family. In terms of assembly, component of the eukaryotic translation initiation factor 3 (eIF-3) complex. The eIF-3 complex interacts with pix. Interacts with mxt.

It is found in the cytoplasm. Its function is as follows. Component of the eukaryotic translation initiation factor 3 (eIF-3) complex, which is involved in protein synthesis of a specialized repertoire of mRNAs and, together with other initiation factors, stimulates binding of mRNA and methionyl-tRNAi to the 40S ribosome. The eIF-3 complex specifically targets and initiates translation of a subset of mRNAs involved in cell proliferation. The chain is Eukaryotic translation initiation factor 3 subunit H from Drosophila melanogaster (Fruit fly).